The sequence spans 284 residues: MTAALSLGWPAPAKLNLFLHINGRREDGYHELQTLFQFIEHCDFLDFKVTENTNLKLHSNMSTVVADNDNLILRAAKSLQEYSQCQQGAEIWLDKRLPMGGGLGGGSSDAATTLVALNSLWGLNIPIDELAKIGLKLGADVPVFINGFSAFAEGVGEQLQPVYPPQPWYLVVVPDVHVSTAEIFQDPALPRNTPKHSLTSLMESPWKNDCQELVAKHSPQVAKALAWLLEYAPSRMTGTGACVFGQFEQEQQAKDALAKLPTSMNGFVAKGANKSPLMLRLAQC.

Residue Lys14 is part of the active site. Pro98–Ser108 contributes to the ATP binding site. Residue Asp140 is part of the active site.

It belongs to the GHMP kinase family. IspE subfamily.

It carries out the reaction 4-CDP-2-C-methyl-D-erythritol + ATP = 4-CDP-2-C-methyl-D-erythritol 2-phosphate + ADP + H(+). It participates in isoprenoid biosynthesis; isopentenyl diphosphate biosynthesis via DXP pathway; isopentenyl diphosphate from 1-deoxy-D-xylulose 5-phosphate: step 3/6. In terms of biological role, catalyzes the phosphorylation of the position 2 hydroxy group of 4-diphosphocytidyl-2C-methyl-D-erythritol. The protein is 4-diphosphocytidyl-2-C-methyl-D-erythritol kinase of Shewanella piezotolerans (strain WP3 / JCM 13877).